Consider the following 72-residue polypeptide: Crustacean hyperglycemic hormone (72 aa).

Position 1 is a pyrrolidone carboxylic acid; partial (Q1). 3 disulfides stabilise this stretch: C7–C43, C23–C39, and C26–C52. V72 carries the valine amide modification.

It belongs to the arthropod CHH/MIH/GIH/VIH hormone family. In terms of processing, the N-terminus forms pyrrolidone carboxylic acid in isoform CHH-II and is free in isoform CHH-I. As to expression, produced by the medulla terminalis X-organ in the eyestalks and transported to the sinus gland where they are stored and released.

The protein localises to the secreted. Its function is as follows. Hormone found in the sinus gland of isopods and decapods which controls the blood sugar level. Has a secretagogue action over the amylase released from the midgut gland. May act as a stress hormone and may be involved in the control of molting and reproduction. The chain is Crustacean hyperglycemic hormone from Cancer pagurus (Rock crab).